The following is a 467-amino-acid chain: Cysteine--tRNA ligase (467 aa).

Cys-29 contacts Zn(2+). The short motif at 31–41 (ATVQGEPHIGH) is the 'HIGH' region element. The Zn(2+) site is built by Cys-207, His-232, and Glu-236. A 'KMSKS' region motif is present at residues 263–267 (KMSKS). Lys-266 contributes to the ATP binding site. The segment at 446–467 (IDVTDTPNGPEWSLRTARGKAN) is disordered.

It belongs to the class-I aminoacyl-tRNA synthetase family. Monomer. Zn(2+) is required as a cofactor.

The protein resides in the cytoplasm. The enzyme catalyses tRNA(Cys) + L-cysteine + ATP = L-cysteinyl-tRNA(Cys) + AMP + diphosphate. This Nocardia farcinica (strain IFM 10152) protein is Cysteine--tRNA ligase.